Here is a 446-residue protein sequence, read N- to C-terminus: N-succinylarginine dihydrolase (446 aa).

Residues 19–28, Asn-110, and 137–138 each bind substrate; these read AGLSFGNVAS and HR. Residue Glu-174 is part of the active site. Residue Arg-213 participates in substrate binding. His-249 is an active-site residue. 2 residues coordinate substrate: Asp-251 and Asn-364. The active-site Nucleophile is Cys-370.

The protein belongs to the succinylarginine dihydrolase family. In terms of assembly, homodimer.

The enzyme catalyses N(2)-succinyl-L-arginine + 2 H2O + 2 H(+) = N(2)-succinyl-L-ornithine + 2 NH4(+) + CO2. It functions in the pathway amino-acid degradation; L-arginine degradation via AST pathway; L-glutamate and succinate from L-arginine: step 2/5. Functionally, catalyzes the hydrolysis of N(2)-succinylarginine into N(2)-succinylornithine, ammonia and CO(2). The protein is N-succinylarginine dihydrolase of Paraburkholderia xenovorans (strain LB400).